The chain runs to 319 residues: MNHVVKHNHTAVTKVTEFILMGITDNPGLQAPLFGLFLIIYLVTVIGNLGMVILTYLDSKLHTPMYFFLRHLSITDLGYSTVIAPKMLVNFIVHKNTISYNWYATQLAFFEIFIISELFILSAMAYDRYVAICKPLLYVIIMAEKVLWVLVIVPYLYSTFVSLFLTIKLFKLSFCGSNIISYFYCDCIPLMSILCSDTNELELIILIFSGCNLLFSLSIVLISYMFILVAILRMNSRKGRYKAFSTCSSHLTVVIMFYGTLLFIYLQPKSSHTLAIDKMASVFYTLLIPMLNPLIYSLRNKEVKDALKRTLTNRFKIPI.

Residues 1 to 31 (MNHVVKHNHTAVTKVTEFILMGITDNPGLQA) are Extracellular-facing. N-linked (GlcNAc...) asparagine glycosylation is present at Asn8. A helical membrane pass occupies residues 32–52 (PLFGLFLIIYLVTVIGNLGMV). Residues 53 to 60 (ILTYLDSK) are Cytoplasmic-facing. Residues 61–81 (LHTPMYFFLRHLSITDLGYST) form a helical membrane-spanning segment. At 82–105 (VIAPKMLVNFIVHKNTISYNWYAT) the chain is on the extracellular side. A helical membrane pass occupies residues 106–126 (QLAFFEIFIISELFILSAMAY). Topologically, residues 127–145 (DRYVAICKPLLYVIIMAEK) are cytoplasmic. A helical membrane pass occupies residues 146–166 (VLWVLVIVPYLYSTFVSLFLT). The Extracellular portion of the chain corresponds to 167 to 203 (IKLFKLSFCGSNIISYFYCDCIPLMSILCSDTNELEL). The helical transmembrane segment at 204-223 (IILIFSGCNLLFSLSIVLIS) threads the bilayer. Residues 224–243 (YMFILVAILRMNSRKGRYKA) lie on the Cytoplasmic side of the membrane. A helical membrane pass occupies residues 244–264 (FSTCSSHLTVVIMFYGTLLFI). Topologically, residues 265–277 (YLQPKSSHTLAID) are extracellular. The helical transmembrane segment at 278–298 (KMASVFYTLLIPMLNPLIYSL) threads the bilayer. The Cytoplasmic portion of the chain corresponds to 299 to 319 (RNKEVKDALKRTLTNRFKIPI).

It belongs to the G-protein coupled receptor 1 family.

It localises to the cell membrane. Odorant receptor. The chain is Olfactory receptor 8K1 (OR8K1) from Homo sapiens (Human).